We begin with the raw amino-acid sequence, 230 residues long: MTDSHAALLEALGVALPAELLTIALTHRSYSYENGGLPTNERLEFLGDAVLGLTITEELYHRHPDRAEGDLAKLRASIVNTQALADVGRGLTDEGLGAHLFLGKGEENSGGADKSSILADGVESLLGAIYLEHGLTVVREVILRLFGELLDTAPTLGAGLDWKSSLQELTAARGLGAPAYVVTSTGPDHDKEFSATVVIGEAEYGHGVGRTKKEAELKAAASAYKTLDES.

The 116-residue stretch at 19 to 134 (ELLTIALTHR…LLGAIYLEHG (116 aa)) folds into the RNase III domain. Residue Glu-44 participates in Mg(2+) binding. Asp-48 is a catalytic residue. Mg(2+) is bound by residues Asp-120 and Glu-123. The DRBM domain maps to 161-229 (DWKSSLQELT…AASAYKTLDE (69 aa)).

Belongs to the ribonuclease III family. In terms of assembly, homodimer. It depends on Mg(2+) as a cofactor.

It is found in the cytoplasm. It catalyses the reaction Endonucleolytic cleavage to 5'-phosphomonoester.. Digests double-stranded RNA. Involved in the processing of primary rRNA transcript to yield the immediate precursors to the all rRNAs (23S, 16S and 5S). Processes some mRNAs, and tRNAs when they are encoded in the rRNA operon. Processes pre-crRNA and tracrRNA of type II CRISPR loci if present in the organism. This chain is Ribonuclease 3 (rnc), found in Mycolicibacterium smegmatis (strain ATCC 700084 / mc(2)155) (Mycobacterium smegmatis).